The primary structure comprises 775 residues: E3 ubiquitin-protein ligase UHRF1 (775 aa).

The 77-residue stretch at M1–P77 folds into the Ubiquitin-like domain. The disordered stretch occupies residues P81–V128. 2 tudor-like regions span residues S131–R207 and D214–P283. The interval P293–E301 is linker. The PHD-type zinc-finger motif lies at G299–D366. Histone H3R2me0 binding stretches follow at residues C333–D337 and P353–D355. The YDG domain maps to G419 to R582. The required to promote base flipping stretch occupies residues H445–V446. Residues A463–G464 and D469 each bind DNA. 2 required for formation of a 5-methylcytosine-binding pocket regions span residues Y466–D469 and Y478–S481. Over residues A616–D628 the composition is skewed to basic and acidic residues. Residues A616 to P655 form a disordered region. An RING-type zinc finger spans residues C706–R745.

Its subcellular location is the nucleus. The catalysed reaction is S-ubiquitinyl-[E2 ubiquitin-conjugating enzyme]-L-cysteine + [acceptor protein]-L-lysine = [E2 ubiquitin-conjugating enzyme]-L-cysteine + N(6)-ubiquitinyl-[acceptor protein]-L-lysine.. It functions in the pathway protein modification; protein ubiquitination. Multidomain protein that acts as a key epigenetic regulator by bridging DNA methylation and chromatin modification. Specifically recognizes and binds hemimethylated DNA at replication forks via its YDG domain and recruits dnmt1 methyltransferase to ensure faithful propagation of the DNA methylation patterns through DNA replication. In addition to its role in maintenance of DNA methylation, also plays a key role in chromatin modification: through its tudor-like regions and PHD-type zinc fingers, specifically recognizes and binds histone H3 trimethylated at 'Lys-9' (H3K9me3) and unmethylated at 'Arg-2' (H3R2me0), respectively, and recruits chromatin proteins. Enriched in pericentric heterochromatin where it recruits different chromatin modifiers required for this chromatin replication. Also localizes to euchromatic regions where it negatively regulates transcription possibly by impacting DNA methylation and histone modifications. Has E3 ubiquitin-protein ligase activity by mediating the ubiquitination of target proteins. However, it is still unclear how E3 ubiquitin-protein ligase activity is related to its role in chromatin in vivo. The protein is E3 ubiquitin-protein ligase UHRF1 (uhrf1) of Xenopus tropicalis (Western clawed frog).